Reading from the N-terminus, the 852-residue chain is Chitin synthase 1 (852 aa).

2 disordered regions span residues 27–46 and 53–97; these read EDQDDMLPSTSAAAGETNYA and SSLR…QANG. Residues 53–74 are compositionally biased toward polar residues; that stretch reads SSLRSQKSANKPTTAQNRNSAA. 7 helical membrane passes run 492 to 509, 532 to 552, 572 to 592, 601 to 621, 686 to 706, 787 to 807, and 830 to 850; these read RWLNGSFFAGVYGLIHFR, VISLVFSWFSVGNFYIAFYFI, IFDFCKYAYAFLLFVIFICSM, FLFMACLVGFAIIMCYMLFCS, FLPYLLLLPGYINILNIYAFC, THLVLAWIACNALLVVFITTS, and CGLGIFRFLGSIMFLLLGIFT.

The protein belongs to the chitin synthase family. Class II subfamily.

The protein localises to the cell membrane. The catalysed reaction is [(1-&gt;4)-N-acetyl-beta-D-glucosaminyl](n) + UDP-N-acetyl-alpha-D-glucosamine = [(1-&gt;4)-N-acetyl-beta-D-glucosaminyl](n+1) + UDP + H(+). Its function is as follows. Polymerizes chitin, a structural polymer of the cell wall and septum, by transferring the sugar moiety of UDP-GlcNAc to the non-reducing end of the growing chitin polymer. This Mucor circinelloides f. lusitanicus (Mucor racemosus var. lusitanicus) protein is Chitin synthase 1 (CHS1).